The primary structure comprises 305 residues: tRNA pseudouridine synthase B (305 aa).

Catalysis depends on D39, which acts as the Nucleophile. The 69-residue stretch at L237–K305 folds into the PUA domain.

It belongs to the pseudouridine synthase TruB family. Type 1 subfamily.

It carries out the reaction uridine(55) in tRNA = pseudouridine(55) in tRNA. Functionally, responsible for synthesis of pseudouridine from uracil-55 in the psi GC loop of transfer RNAs. The chain is tRNA pseudouridine synthase B from Moorella thermoacetica (strain ATCC 39073 / JCM 9320).